Reading from the N-terminus, the 320-residue chain is MDYRVLLYYKYVTIDDPETFAAEHLKFCKEHHLKGRILVSTEGINGTLSGTKEDTDKYIEHMHADSRFADLTFKIDEAESHAFKKMHVRPRREIVALDLEEDINPREITGKYYSPKEFKAALEDENTVILDARNDYEYDLGHFRGAIRPDITRFRDLPEWVRNNKEQLDGKNIVTYCTGGIRCEKFSGWLVKEGFENVGQLHGGIATYGKDPETKGLYWDGKMYVFDERISVDVNQIDKTVIGKEHFDGTPCERYINCANPECNKQILVSEENEEKYLGACSYDCAKHERNRYVARHHISNEEWQRRLNNFKDVPEHTHA.

The Rhodanese domain maps to 123-217 (EDENTVILDA…YGKDPETKGL (95 aa)). The active-site Cysteine persulfide intermediate is Cys-177.

The protein belongs to the TrhO family.

It carries out the reaction uridine(34) in tRNA + AH2 + O2 = 5-hydroxyuridine(34) in tRNA + A + H2O. In terms of biological role, catalyzes oxygen-dependent 5-hydroxyuridine (ho5U) modification at position 34 in tRNAs. This chain is tRNA uridine(34) hydroxylase, found in Staphylococcus epidermidis (strain ATCC 35984 / DSM 28319 / BCRC 17069 / CCUG 31568 / BM 3577 / RP62A).